The chain runs to 390 residues: Isoaspartyl dipeptidase (390 aa).

Residues His68 and His70 each contribute to the Zn(2+) site. Substrate contacts are provided by residues 75–77 (GGE), Thr106, and Tyr137. Lys162 is a binding site for Zn(2+). Lys162 is subject to N6-carboxylysine. Arg169 is a substrate binding site. The Zn(2+) site is built by His201 and His230. Arg233 contributes to the substrate binding site. Zn(2+) is bound at residue Asp285. Asp285 (proton acceptor) is an active-site residue. Ser289 contributes to the substrate binding site.

Belongs to the peptidase M38 family. Zn(2+) is required as a cofactor. The cofactor is Co(2+). Carboxylation allows a single lysine to coordinate two zinc ions.

The protein localises to the cytoplasm. P-hydroxymercuribenzoate causes a slight inhibition (8 to 17 %). Iodoacetamide, o-iodosobenzoate and ammonium persulfate do not inhibit the enzyme activity. Its function is as follows. Catalyzes the hydrolytic cleavage of a subset of L-isoaspartyl (L-beta-aspartyl) dipeptides. Used to degrade proteins damaged by L-isoaspartyl residues formation. The best substrate for the enzyme reported thus far is iso-Asp-Leu. The chain is Isoaspartyl dipeptidase (iadA) from Escherichia coli (strain K12).